The following is a 547-amino-acid chain: MAAKDVKFSGDARDRMLRGVDVLANAVKVTLGPKGRNVLIEKSFGAPRITKDGVTVAKEVELEDKFENMGAQMVREVASKTNDLAGDGTTTATVLAQAIVREGAKAVAAGMNPMDLKRGIEIAVAAVVKDIQKRAKPVASSAEIAQVGTISANGDAPIGKMIAQAMQKVGNEGVITVEENKSLETEVDIVEGMKFDRGYLSPYFVTNAEKMTVELDDAYILLHEKKLSGLQSMLPVLEAVVQSGKPLLIIAEDVEGEALATLVVNRLRGGLKVSAVKAPGFGDRRKAMLEDIAILTGGQLISEDLGIKLETVTLKMLGRAKKVVIDKENTTIVNGAGKKPEIEARVSQIKAQIEETSSDYDREKLQERLAKLAGGVAVIRVGGATEVEVKEKKDRVEDALNATRAAVQEGIVPGGGVALLRAKKAVGRISNDNPDVQAGINIVLKALEAPIRQIAENAGVEGSIVVGKILENKTETFGFDAQTEEYVDMLAKGIVDPAKVVRTALQDASSVASLLVTTEAMVAELPKADAPAMPAGGGMGGMGGMGF.

ATP contacts are provided by residues 30–33, Lys-51, 87–91, Gly-415, and Asp-496; these read TLGP and DGTTT.

This sequence belongs to the chaperonin (HSP60) family. Forms a cylinder of 14 subunits composed of two heptameric rings stacked back-to-back. Interacts with the co-chaperonin GroES.

It is found in the cytoplasm. It carries out the reaction ATP + H2O + a folded polypeptide = ADP + phosphate + an unfolded polypeptide.. In terms of biological role, together with its co-chaperonin GroES, plays an essential role in assisting protein folding. The GroEL-GroES system forms a nano-cage that allows encapsulation of the non-native substrate proteins and provides a physical environment optimized to promote and accelerate protein folding. This Rhodopseudomonas palustris (strain ATCC BAA-98 / CGA009) protein is Chaperonin GroEL 1.